A 384-amino-acid polypeptide reads, in one-letter code: Galactokinase (384 aa).

Residue 34-37 (EHTD) participates in substrate binding. 123–129 (SSGLSSS) is an ATP binding site. Residues serine 129 and glutamate 161 each coordinate Mg(2+). The active-site Proton acceptor is the aspartate 173. Residue tyrosine 222 participates in substrate binding.

The protein belongs to the GHMP kinase family. GalK subfamily.

The protein resides in the cytoplasm. The enzyme catalyses alpha-D-galactose + ATP = alpha-D-galactose 1-phosphate + ADP + H(+). Its pathway is carbohydrate metabolism; galactose metabolism. In terms of biological role, catalyzes the transfer of the gamma-phosphate of ATP to D-galactose to form alpha-D-galactose-1-phosphate (Gal-1-P). In Haemophilus influenzae (strain ATCC 51907 / DSM 11121 / KW20 / Rd), this protein is Galactokinase.